Here is a 389-residue protein sequence, read N- to C-terminus: Chorismate synthase (389 aa).

Positions 41 and 47 each coordinate NADP(+). Residues 129–131 (RSS), 247–248 (NA), Gly291, 306–310 (KPIST), and Arg332 contribute to the FMN site.

The protein belongs to the chorismate synthase family. In terms of assembly, homotetramer. It depends on FMNH2 as a cofactor.

The catalysed reaction is 5-O-(1-carboxyvinyl)-3-phosphoshikimate = chorismate + phosphate. It functions in the pathway metabolic intermediate biosynthesis; chorismate biosynthesis; chorismate from D-erythrose 4-phosphate and phosphoenolpyruvate: step 7/7. Functionally, catalyzes the anti-1,4-elimination of the C-3 phosphate and the C-6 proR hydrogen from 5-enolpyruvylshikimate-3-phosphate (EPSP) to yield chorismate, which is the branch point compound that serves as the starting substrate for the three terminal pathways of aromatic amino acid biosynthesis. This reaction introduces a second double bond into the aromatic ring system. This is Chorismate synthase from Rubrobacter xylanophilus (strain DSM 9941 / JCM 11954 / NBRC 16129 / PRD-1).